The following is a 334-amino-acid chain: Protein-methionine-sulfoxide reductase catalytic subunit MsrP (334 aa).

The segment at residues 1–44 is a signal peptide (tat-type signal); it reads MKKNQFLKESDVTAESVFFMKRRQVLKALGISAAALSLPHAAHA. Mo-molybdopterin-binding positions include asparagine 88, 91–92, cysteine 146, threonine 181, asparagine 233, arginine 238, and 249–251; these read YE and GIK.

Belongs to the MsrP family. In terms of assembly, heterodimer of a catalytic subunit (MsrP) and a heme-binding subunit (MsrQ). The cofactor is Mo-molybdopterin. In terms of processing, predicted to be exported by the Tat system. The position of the signal peptide cleavage has not been experimentally proven.

The protein resides in the periplasm. The enzyme catalyses L-methionyl-[protein] + a quinone + H2O = L-methionyl-(S)-S-oxide-[protein] + a quinol. It catalyses the reaction L-methionyl-[protein] + a quinone + H2O = L-methionyl-(R)-S-oxide-[protein] + a quinol. Functionally, part of the MsrPQ system that repairs oxidized periplasmic proteins containing methionine sulfoxide residues (Met-O), using respiratory chain electrons. Thus protects these proteins from oxidative-stress damage caused by reactive species of oxygen and chlorine generated by the host defense mechanisms. MsrPQ is essential for the maintenance of envelope integrity under bleach stress, rescuing a wide series of structurally unrelated periplasmic proteins from methionine oxidation, including the primary periplasmic chaperone SurA and the lipoprotein Pal. The catalytic subunit MsrP is non-stereospecific, being able to reduce both (R-) and (S-) diastereoisomers of methionine sulfoxide. This Shigella sonnei (strain Ss046) protein is Protein-methionine-sulfoxide reductase catalytic subunit MsrP.